The following is a 336-amino-acid chain: Quinolinate synthase (336 aa).

Iminosuccinate contacts are provided by histidine 25 and serine 42. Residue cysteine 86 participates in [4Fe-4S] cluster binding. Residues 117–119 (YIN) and serine 138 contribute to the iminosuccinate site. Position 198 (cysteine 198) interacts with [4Fe-4S] cluster. Iminosuccinate is bound by residues 224–226 (HPE) and threonine 241. [4Fe-4S] cluster is bound at residue cysteine 288.

Belongs to the quinolinate synthase family. Type 3 subfamily. The cofactor is [4Fe-4S] cluster.

The protein resides in the cytoplasm. The catalysed reaction is iminosuccinate + dihydroxyacetone phosphate = quinolinate + phosphate + 2 H2O + H(+). Its pathway is cofactor biosynthesis; NAD(+) biosynthesis; quinolinate from iminoaspartate: step 1/1. Catalyzes the condensation of iminoaspartate with dihydroxyacetone phosphate to form quinolinate. The polypeptide is Quinolinate synthase (Helicobacter pylori (strain ATCC 700392 / 26695) (Campylobacter pylori)).